Consider the following 791-residue polypeptide: Exocyst complex component EXO84 (791 aa).

A disordered region spans residues 16-101; sequence RNRKSRAVWQ…GDLNSNKKQS (86 aa). Polar residues predominate over residues 23 to 42; the sequence is VWQNNNTTTHNNPYANLSTG. Positions 70–83 are enriched in low complexity; the sequence is TGNNNKSNTSGNLL. Residues 190-229 are a coiled coil; the sequence is RDIKDNINQNQKNILQLTKDLKETQEELIELRGTTKELYE. Residue Lys-193 forms a Glycyl lysine isopeptide (Lys-Gly) (interchain with G-Cter in ubiquitin) linkage. Residues 247–256 show a composition bias toward basic and acidic residues; that stretch reads EPETQKELHS. Disordered regions lie at residues 247-271 and 432-495; these read EPET…NKKK and ERLL…NSTD. The span at 438 to 447 shows a compositional bias: polar residues; sequence RLSSPSNNNG. The span at 448-460 shows a compositional bias: basic and acidic residues; it reads DSKEEKRQLRESL. Positions 521-577 form a coiled coil; that stretch reads ANNGKSQFFNEIKTLEDRLDDVDVEISHNQYAEAVELISIIESKLRNIENALTNQRN.

The protein belongs to the EXO84 family. In terms of assembly, component of the exocyst complex.

Its subcellular location is the cytoplasmic vesicle. It is found in the secretory vesicle. Its function is as follows. Involved in the secretory pathway as part of the exocyst complex which tethers secretory vesicles to the sites of exocytosis. Plays a role in both the assembly of the exocyst and the polarization of this complex to specific sites of the plasma membrane for exocytosis. Also involved in assembly of the spliceosome. This chain is Exocyst complex component EXO84 (EXO84), found in Candida albicans (strain SC5314 / ATCC MYA-2876) (Yeast).